A 362-amino-acid polypeptide reads, in one-letter code: Transcription factor bHLH128 (362 aa).

A compositionally biased stretch (low complexity) spans 1-16; the sequence is MYQSSSSTSSSSQRSS. Disordered stretches follow at residues 1–23, 78–106, 120–140, and 162–184; these read MYQSSSSTSSSSQRSSLPGGGGL, SDSTTCGVNNSSDGQKQLGNNNNNNSNKD, SQQHKSNDIGGGNSSGSYSLA, and LNQPTSDYSPQGGSNGGRGHSRL. Residues 78 to 96 are compositionally biased toward polar residues; sequence SDSTTCGVNNSSDGQKQLG. Positions 162-173 are enriched in polar residues; the sequence is LNQPTSDYSPQG. Ser189 is subject to Phosphoserine. A bHLH domain is found at 289 to 339; that stretch reads CATHPRSIAERERRTRISGKLKKLQDLVPNMDKQTSYSDMLDLAVQHIKGL.

In terms of assembly, homodimer.

The protein resides in the nucleus. The chain is Transcription factor bHLH128 (BHLH128) from Arabidopsis thaliana (Mouse-ear cress).